Reading from the N-terminus, the 333-residue chain is Glyoxylate reductase (333 aa).

NADP(+) is bound by residues 158-161 (FGRI), 180-182 (SRS), and 239-241 (IAR). Active-site residues include Arg241 and Glu270. His288 (proton donor) is an active-site residue. 288-290 (HIG) contributes to the NADP(+) binding site.

This sequence belongs to the D-isomer specific 2-hydroxyacid dehydrogenase family. GyaR subfamily. In terms of assembly, homodimer.

The protein localises to the cytoplasm. The catalysed reaction is glycolate + NAD(+) = glyoxylate + NADH + H(+). The chain is Glyoxylate reductase from Thermococcus kodakarensis (strain ATCC BAA-918 / JCM 12380 / KOD1) (Pyrococcus kodakaraensis (strain KOD1)).